The following is a 315-amino-acid chain: tRNA dimethylallyltransferase (315 aa).

Position 13–20 (13–20) interacts with ATP; it reads GPTASGKT. A substrate-binding site is contributed by 15 to 20; that stretch reads TASGKT. Interaction with substrate tRNA stretches follow at residues 38 to 41, 162 to 166, 243 to 248, and 276 to 283; these read DSAL, QRLSR, RCVGYR, and KRQITWLR.

Belongs to the IPP transferase family. Monomer. Mg(2+) is required as a cofactor.

The catalysed reaction is adenosine(37) in tRNA + dimethylallyl diphosphate = N(6)-dimethylallyladenosine(37) in tRNA + diphosphate. Catalyzes the transfer of a dimethylallyl group onto the adenine at position 37 in tRNAs that read codons beginning with uridine, leading to the formation of N6-(dimethylallyl)adenosine (i(6)A). The protein is tRNA dimethylallyltransferase of Vibrio vulnificus (strain CMCP6).